Consider the following 182-residue polypeptide: ATP-dependent protease subunit HslV (182 aa).

The active site involves Thr7. Na(+) is bound by residues Gly162, Cys165, and Thr168.

This sequence belongs to the peptidase T1B family. HslV subfamily. As to quaternary structure, a double ring-shaped homohexamer of HslV is capped on each side by a ring-shaped HslU homohexamer. The assembly of the HslU/HslV complex is dependent on binding of ATP.

Its subcellular location is the cytoplasm. It carries out the reaction ATP-dependent cleavage of peptide bonds with broad specificity.. With respect to regulation, allosterically activated by HslU binding. Protease subunit of a proteasome-like degradation complex believed to be a general protein degrading machinery. The chain is ATP-dependent protease subunit HslV from Legionella pneumophila subsp. pneumophila (strain Philadelphia 1 / ATCC 33152 / DSM 7513).